We begin with the raw amino-acid sequence, 1103 residues long: Ubiquitin carboxyl-terminal hydrolase 7 (1103 aa).

Low complexity predominate over residues Met1–Gln11. Disordered regions lie at residues Met1–Pro41 and Asn46–Ser65. The interval Met1–Lys209 is interaction with TSPYL5. Position 19 is a phosphoserine (Ser19). Acidic residues predominate over residues Glu20–Asp32. Phosphoserine occurs at positions 50 and 54. An interaction with p53/TP53 and MDM2 region spans residues Ser54–Lys209. The region spanning Glu69–Val196 is the MATH domain. A necessary for nuclear localization region spans residues Thr71–Trp206. The 308-residue stretch at Val215–Glu522 folds into the USP domain. Cys224 serves as the catalytic Nucleophile. The active-site Proton acceptor is His465. Lys870 is modified (N6-acetyllysine; alternate). A Glycyl lysine isopeptide (Lys-Gly) (interchain with G-Cter in SUMO2); alternate cross-link involves residue Lys870. Lys870 participates in a covalent cross-link: Glycyl lysine isopeptide (Lys-Gly) (interchain with G-Cter in ubiquitin); alternate. Lys883 participates in a covalent cross-link: Glycyl lysine isopeptide (Lys-Gly) (interchain with G-Cter in SUMO2). The residue at position 964 (Ser964) is a Phosphoserine. 2 positions are modified to N6-acetyllysine: Lys1085 and Lys1097.

The protein belongs to the peptidase C19 family. In terms of assembly, monomer. Homodimer. Part of a complex with DAXX, MDM2, RASSF1 and USP7. Part of a complex with DAXX, MDM2 and USP7. Interacts with MDM2; the interaction is independent of p53/TP53. Interacts with DAXX; the interaction is direct and independent of MDM2 and p53/TP53. Component of a complex composed of KMT2E, OGT and USP7; the complex stabilizes KMT2E, preventing KMT2E ubiquitination and proteasomal-mediated degradation. Interacts (via MATH domain) with KMT2E. Interacts with OGT. Interacts with FOXO4; the interaction is enhanced in presence of hydrogen peroxide and occurs independently of p53/TP53. Interacts with p53/TP53; the interaction is enhanced in response to DNA damage; the interaction is impaired by TSPYL5. Interacts with PTEN; the interaction is direct. Interacts with ATXN1 and the strength of interaction is influenced by the length of the poly-Gln region in ATXN1. A weaker interaction seen with mutants having longer poly-Gln regions. Interacts with KIAA1530/UVSSA. Interacts with MEX3C and antagonizes its ability to degrade mRNA. Interacts with DNMT1 and UHRF1. Interacts with FOXP3. Interacts (via MATH domain) with RNF220. Associated component of the Polycomb group (PcG) multiprotein PRC1-like complex. Interacts with EPOP. Interacts with OTUD4 and USP9X; the interaction is direct. Interacts with CRY2. Interacts with REST. Interacts with ERCC6. Part of a complex consisting of USP7, MAGEL2 and TRIM27; directly interacts with MAGEL2; directly interacts with TRIM27. In terms of processing, polyneddylated. Not sumoylated. Post-translationally, polyubiquitinated. Ubiquitinated at Lys-870. Widely expressed. High expression is detected in brain, bone marrow, thymus and testis.

It localises to the nucleus. The protein localises to the cytoplasm. The protein resides in the PML body. It is found in the chromosome. The enzyme catalyses Thiol-dependent hydrolysis of ester, thioester, amide, peptide and isopeptide bonds formed by the C-terminal Gly of ubiquitin (a 76-residue protein attached to proteins as an intracellular targeting signal).. Its function is as follows. Hydrolase that deubiquitinates target proteins such as ARMC5, FOXO4, DEPTOR, KAT5, p53/TP53, MDM2, ERCC6, DNMT1, UHRF1, PTEN, KMT2E/MLL5 and DAXX. Together with DAXX, prevents MDM2 self-ubiquitination and enhances the E3 ligase activity of MDM2 towards p53/TP53, thereby promoting p53/TP53 ubiquitination and proteasomal degradation. Deubiquitinates p53/TP53, preventing degradation of p53/TP53, and enhances p53/TP53-dependent transcription regulation, cell growth repression and apoptosis. Deubiquitinates p53/TP53 and MDM2 and strongly stabilizes p53/TP53 even in the presence of excess MDM2, and also induces p53/TP53-dependent cell growth repression and apoptosis. Deubiquitination of FOXO4 in presence of hydrogen peroxide is not dependent on p53/TP53 and inhibits FOXO4-induced transcriptional activity. In association with DAXX, is involved in the deubiquitination and translocation of PTEN from the nucleus to the cytoplasm, both processes that are counteracted by PML. Deubiquitinates KMT2E preventing KMT2E proteasomal-mediated degradation. Involved in cell proliferation during early embryonic development. Involved in transcription-coupled nucleotide excision repair (TC-NER) in response to UV damage: recruited to DNA damage sites following interaction with KIAA1530/UVSSA and promotes deubiquitination of ERCC6, preventing UV-induced degradation of ERCC6. Involved in maintenance of DNA methylation via its interaction with UHRF1 and DNMT1: acts by mediating deubiquitination of UHRF1 and DNMT1, preventing their degradation and promoting DNA methylation by DNMT1. Deubiquitinates alkylation repair enzyme ALKBH3. OTUD4 recruits USP7 and USP9X to stabilize ALKBH3, thereby promoting the repair of alkylated DNA lesions. Acts as a chromatin regulator via its association with the Polycomb group (PcG) multiprotein PRC1-like complex; may act by deubiquitinating components of the PRC1-like complex. Able to mediate deubiquitination of histone H2B; it is however unsure whether this activity takes place in vivo. Exhibits a preference towards 'Lys-48'-linked ubiquitin chains. Increases regulatory T-cells (Treg) suppressive capacity by deubiquitinating and stabilizing the transcription factor FOXP3 which is crucial for Treg cell function. Plays a role in the maintenance of the circadian clock periodicity via deubiquitination and stabilization of the CRY1 and CRY2 proteins. Deubiquitinates REST, thereby stabilizing REST and promoting the maintenance of neural progenitor cells. Deubiquitinates SIRT7, inhibiting SIRT7 histone deacetylase activity and regulating gluconeogenesis. Involved in the regulation of WASH-dependent actin polymerization at the surface of endosomes and the regulation of endosomal protein recycling. It maintains optimal WASH complex activity and precise F-actin levels via deubiquitination of TRIM27 and WASHC1. Mediates the deubiquitination of phosphorylated DEPTOR, promoting its stability and leading to decreased mTORC1 signaling. This Mus musculus (Mouse) protein is Ubiquitin carboxyl-terminal hydrolase 7 (Usp7).